Reading from the N-terminus, the 308-residue chain is Protoheme IX farnesyltransferase 2 (308 aa).

A run of 9 helical transmembrane segments spans residues 20-40 (VTKP…FLLA), 47-67 (AVLM…GCAI), 92-114 (IPLK…LLAW), 118-137 (LAAL…LYSL), 144-164 (VYGT…GYCA), 174-194 (LILL…IAIF), 218-238 (LHIV…PLAG), 240-260 (TGVG…LMAL), and 275-295 (QVFG…ALDF).

The protein belongs to the UbiA prenyltransferase family. Protoheme IX farnesyltransferase subfamily.

The protein localises to the cell inner membrane. The enzyme catalyses heme b + (2E,6E)-farnesyl diphosphate + H2O = Fe(II)-heme o + diphosphate. It functions in the pathway porphyrin-containing compound metabolism; heme O biosynthesis; heme O from protoheme: step 1/1. In terms of biological role, converts heme B (protoheme IX) to heme O by substitution of the vinyl group on carbon 2 of heme B porphyrin ring with a hydroxyethyl farnesyl side group. This is Protoheme IX farnesyltransferase 2 from Shewanella loihica (strain ATCC BAA-1088 / PV-4).